Consider the following 329-residue polypeptide: Homeobox protein ceh-40 (329 aa).

Positions 3-186 (EASKSIMDLL…VIQLKKRYLD (184 aa)) constitute a PBC domain. The interval 10-90 (DLLSEVVKIT…EGVAGPDDSL (81 aa)) is PBC-A. The tract at residues 93–186 (IQEAAGTDQY…VIQLKKRYLD (94 aa)) is PBC-B. The homeobox; TALE-type DNA-binding region spans 187 to 249 (ARRKRRNFSK…NKRIRYKKTM (63 aa)). A disordered region spans residues 248–275 (TMAKNEDERRENRKPEDRPPPGAPGAPY). A compositionally biased stretch (basic and acidic residues) spans 250-266 (AKNEDERRENRKPEDRP).

Belongs to the TALE/PBX homeobox family. Expressed in head dopaminergic neurons.

The protein localises to the nucleus. Its function is as follows. Plays a role in regulating gene expression in dopaminergic neurons, acting redundantly with homeobox protein ceh-20 in head neurons. May activate dopamine pathway genes in concert with ETS domain-containing protein ast-1, and homeobox proteins ceh-43 and ceh-20. The protein is Homeobox protein ceh-40 (ceh-40) of Caenorhabditis elegans.